A 121-amino-acid chain; its full sequence is Small ribosomal subunit protein uS13 (121 aa).

Residues 91–121 (HRRGLPVRGQNSKNNARTRKGPRRTVANKKK) form a disordered region. Residues 106 to 121 (ARTRKGPRRTVANKKK) are compositionally biased toward basic residues.

It belongs to the universal ribosomal protein uS13 family. Part of the 30S ribosomal subunit. Forms a loose heterodimer with protein S19. Forms two bridges to the 50S subunit in the 70S ribosome.

Its function is as follows. Located at the top of the head of the 30S subunit, it contacts several helices of the 16S rRNA. In the 70S ribosome it contacts the 23S rRNA (bridge B1a) and protein L5 of the 50S subunit (bridge B1b), connecting the 2 subunits; these bridges are implicated in subunit movement. Contacts the tRNAs in the A and P-sites. This is Small ribosomal subunit protein uS13 from Bacillus cereus (strain AH187).